A 140-amino-acid chain; its full sequence is Endoribonuclease YbeY (140 aa).

Zn(2+) is bound by residues H101, H105, and H111.

The protein belongs to the endoribonuclease YbeY family. Requires Zn(2+) as cofactor.

The protein resides in the cytoplasm. Functionally, single strand-specific metallo-endoribonuclease involved in late-stage 70S ribosome quality control and in maturation of the 3' terminus of the 16S rRNA. The chain is Endoribonuclease YbeY from Aliarcobacter butzleri (strain RM4018) (Arcobacter butzleri).